The primary structure comprises 525 residues: D-3-phosphoglycerate dehydrogenase (525 aa).

NAD(+) is bound by residues 148–149 (RI), Asp168, Thr200, 227–229 (CAR), and Asp253. Arg229 is a catalytic residue. Glu258 is a catalytic residue. Catalysis depends on His276, which acts as the Proton donor. Residue 276 to 279 (HLGA) participates in NAD(+) binding. Residues 452–524 (LVYIQHQDTT…DIVSVKLIDL (73 aa)) form the ACT domain.

This sequence belongs to the D-isomer specific 2-hydroxyacid dehydrogenase family.

The enzyme catalyses (2R)-3-phosphoglycerate + NAD(+) = 3-phosphooxypyruvate + NADH + H(+). It carries out the reaction (R)-2-hydroxyglutarate + NAD(+) = 2-oxoglutarate + NADH + H(+). The protein operates within amino-acid biosynthesis; L-serine biosynthesis; L-serine from 3-phospho-D-glycerate: step 1/3. In bacteria displays feedback inhibition by L-serine. Functionally, catalyzes the reversible oxidation of 3-phospho-D-glycerate to 3-phosphonooxypyruvate, the first step of the phosphorylated L-serine biosynthesis pathway. Also catalyzes the reversible oxidation of 2-hydroxyglutarate to 2-oxoglutarate. This Bacillus subtilis (strain 168) protein is D-3-phosphoglycerate dehydrogenase (serA).